Here is a 335-residue protein sequence, read N- to C-terminus: MSQRISLTRYLVEQQRREGHIPAQLRLLLEVVARACKGISQSVNKGALGGVLGTAGSENVQGEVQKKLDIIANEVLIEANEWGGHLAAMASEEMDSIYLVPNRYPQGEYLLLFDPLDGSSNIDVNVSIGTIFSVLKKPDDHAGVEEKDFLQPGNKQVAAGYCVYGPQTTLVLTVGDGVAMFTLDREQGSFVLIEENVRIPEDTKEFAINMSNMRHWDAPVKRYIDECLQGTEGPRGKDFNMRWVASMVADVHRILSRGGIFMYPWDKREPEKAGKLRLMYEANPMGWIVEQAGGSATNGKQRILDIQPGKLHERVSVILGSKNEVERVTGYHSGL.

Mg(2+) contacts are provided by E92, D114, L116, and D117. Substrate is bound by residues 117 to 120, N209, and K275; that span reads DGSS. E281 is a binding site for Mg(2+).

It belongs to the FBPase class 1 family. In terms of assembly, homotetramer. Mg(2+) is required as a cofactor.

It is found in the cytoplasm. It carries out the reaction beta-D-fructose 1,6-bisphosphate + H2O = beta-D-fructose 6-phosphate + phosphate. The protein operates within carbohydrate biosynthesis; gluconeogenesis. This chain is Fructose-1,6-bisphosphatase class 1, found in Polaromonas sp. (strain JS666 / ATCC BAA-500).